Here is a 144-residue protein sequence, read N- to C-terminus: Maximins 10/H3 (144 aa).

The N-terminal stretch at 1–18 (MNFKYIVAVSFLIASAYA) is a signal peptide. Positions 19-43 (RSVKNDEQSLSQRDVLDEESLREFR) are excised as a propeptide. Ser-70 bears the Serine amide mark. Positions 74-123 (TAEDHEVMKRLEAVMRDLDSLDYPEEATERETRGFNQEEIANLFTKKEKR) are excised as a propeptide. Ile-143 is modified (isoleucine amide).

This sequence belongs to the bombinin family. As to expression, expressed by the skin glands.

It is found in the secreted. Functionally, maximin-10 shows antimicrobial activity against bacteria and against the fungus C.albicans. It has little hemolytic activity. Its function is as follows. Maximin-H3 shows antibacterial activity against both Gram-positive and Gram-negative bacteria. It also shows antimicrobial activity against the fungus C.albicans. Shows strong hemolytic activity. The protein is Maximins 10/H3 of Bombina maxima (Giant fire-bellied toad).